A 577-amino-acid polypeptide reads, in one-letter code: Vacuolar membrane amino acid uptake transporter fnx2 (577 aa).

A compositionally biased stretch (polar residues) spans 1–14 (MSNPRTKSPNTNRG). A disordered region spans residues 1–80 (MSNPRTKSPN…SPHRQDAATT (80 aa)). Low complexity predominate over residues 22–39 (SALLNDSLSSLNGNSSYD). A compositionally biased stretch (basic and acidic residues) spans 40 to 62 (SIKDSSKNNKDVAEVNEYPRRPE). 14 helical membrane passes run 91–111 (VLPA…IVAS), 123–145 (FSQV…PLFG), 157–177 (LLAA…SRSL), 186–206 (IAGI…SDIV), 217–237 (IINV…GYFA), 244–264 (IGFL…YFTL), 286–306 (LILL…GGNV), 317–337 (LLIA…FVAF), 356–376 (LCNF…PLFF), 391–411 (LIPM…VISL), 418–438 (ITVG…RYGY), 448–468 (YPFS…VAII), 490–510 (GCVL…GIKL), and 547–567 (LLGS…CAFV).

The protein belongs to the major facilitator superfamily.

It is found in the vacuole. Its subcellular location is the membrane. Its function is as follows. MFS-type transporter involved in vacuolar amino acid uptake. In Schizosaccharomyces pombe (strain 972 / ATCC 24843) (Fission yeast), this protein is Vacuolar membrane amino acid uptake transporter fnx2 (fnx2).